The primary structure comprises 1117 residues: Protein cup (1117 aa).

The disordered stretch occupies residues 1–106 (MQMAEAEQEN…PPPPPPLPTS (106 aa)). 2 stretches are compositionally biased toward pro residues: residues 54–64 (YPPPPPPPTPV) and 95–104 (CAPPPPPPLP). Phosphoserine is present on residues S263 and S270. The disordered stretch occupies residues 270-326 (SPRKQVASKEAVPEQQSSQVQQKRPPSTGIHKPGSLRAPKAVRPTTAPVVSSKPVKS). The span at 283-294 (EQQSSQVQQKRP) shows a compositional bias: polar residues. Residues 327–333 (YTRSRLM) carry the YXXXXLphi motif 1 motif. A phosphoserine mark is found at S347 and S350. Positions 363 to 369 (ELEGRLR) match the YXXXXLphi motif 2 motif. 6 disordered regions span residues 493–528 (ISSQ…EDLS), 596–618 (KEGN…KMDH), 654–673 (TEHQ…SFQF), 679–728 (SQQN…SSSS), 984–1004 (GAKH…QARP), and 1016–1051 (ISGG…FQSF). A Phosphothreonine modification is found at T503. Residues S509, S513, S520, S523, and S524 each carry the phosphoserine modification. Composition is skewed to low complexity over residues 679–712 (SQQN…NTNN) and 988–1001 (QAQQ…QQRQ).

Belongs to the 4E-T/EIF4E-T family. As to quaternary structure, component of the osk RNP complex, which is composed of at least exu, yps, aret/bruno, cup, and the mRNA of osk. Interacts with the decapping activators me31B and tral. Component of the nanos RNP complex, which is composed of at least smg, cup, tral, me31B, the CCR4-NOT complex members Rga/NOT2 and Caf1, and the mRNA of nanos (nos). Interacts with btz. Recruited to the 3'-UTR of nos and osk mRNAs by smg and btz, respectively. Forms a ribonucleoprotein complex (RNP) containing at least me31B, eIF4E1, cup, tral and pAbp; this interaction is required for the translational silencing of maternal mRNAs during the maternal-to-zygotic transition. No interaction was detected with pAbp in 1-5 hour embryos. Interacts with osk and vas. Interacts with Pop2, twin/CCR4, Rga, Not3 and Not1 which are all core components of the CCR4-NOT deadenylase complex; interaction with the complex is required for cup deadenylation activity. Interacts with nanos. Interacts with smg. Interacts (via YXXXXLphi motifs) with eIF4E1; the interaction promotes retention of cup in the cytoplasm. Interacts with orb; the interaction represses the orb positive autoregulatory loop. Interacts with Nup154. Predominantly expressed in ovaries and in 0-2 hours old embryos. Weakly expressed in testis. Expressed in young embryos through stage 9, then it decreases throughout the rest of embryogenesis. In ovaries, it is expressed in germ cells throughout pre-vitellogenic development, but is not expressed in the somatic follicle cells. In germarial cysts, the protein (and not the transcripts) is transported selectively into the oocyte.

It is found in the cytoplasm. The protein localises to the nucleus. It localises to the cytoplasmic ribonucleoprotein granule. Its function is as follows. Adapter protein that plays a central role in localization of transcripts in the oocyte and in young embryos. Maintains RNA targets in a repressed state by promoting their deadenylation and protects deadenylated mRNAs from further degradation. Binds to and recruits eIF-4E to the 3'-UTR of some mRNA targets which prevents interaction between eIF4E1 and eIF4G. This may contribute to translational repression but does not appear to be necessary for it to occur. Can promote translational repression independently of deadenylation and eIF4E1 binding. Required for correct localization of eIF4E1 in the developing oocyte. Required for translational repression of oskar (osk) mRNA. Also required for the translational repression of nanos (nos) mRNA. Promotes the accumulation of the germ plasm components osk, vas and stau at the posterior pole of the oocyte and is required for germ cell development. Represses orb positive autoregulatory activity which prevents premature activation of orb and ensures its accumulation specifically in the developing oocyte. In 0-1 hour embryos, forms a complex with me31B, cup, tral and pAbp which binds to various mRNAs including maternal mRNAs, and down-regulates their expression during the maternal-to-zygotic transition. In Drosophila melanogaster (Fruit fly), this protein is Protein cup (cup).